Reading from the N-terminus, the 80-residue chain is Beta-toxin KAaH1 (80 aa).

The first 22 residues, 1–22, serve as a signal peptide directing secretion; it reads MMKLMLFSIIVILFSLIGSIHG. Residues 25–80 enclose the LCN-type CS-alpha/beta domain; the sequence is VPGNYPLDSSDDTYLCAPLGENPFCIKICRKHGVKYGYCYAFQCWCEYLEDKNVKI. Disulfide bonds link C40/C63, C49/C68, and C53/C70.

This sequence belongs to the long (3 C-C) scorpion toxin superfamily. Sodium/Potassium channel inhibitor family. In terms of tissue distribution, expressed by the venom gland.

It is found in the secreted. Inhibits the vertebrate potassium channels Kv1.1/KCNA1 and Kv1.3/KCNA3 in vitro with an IC(50) of 5.3 nM and 50.0 nM respectively. This chain is Beta-toxin KAaH1, found in Androctonus australis (Sahara scorpion).